Reading from the N-terminus, the 174-residue chain is Translationally-controlled tumor protein homolog 1 (174 aa).

The TCTP domain maps to 1–174 (MRVFKDIVGY…FKDGLESVKY (174 aa)).

Belongs to the TCTP family.

Its subcellular location is the cytoplasm. Involved in calcium binding and microtubule stabilization. The protein is Translationally-controlled tumor protein homolog 1 of Dictyostelium discoideum (Social amoeba).